The primary structure comprises 373 residues: Anhydro-N-acetylmuramic acid kinase (373 aa).

13–20 lines the ATP pocket; it reads GTSMDGID.

The protein belongs to the anhydro-N-acetylmuramic acid kinase family.

The catalysed reaction is 1,6-anhydro-N-acetyl-beta-muramate + ATP + H2O = N-acetyl-D-muramate 6-phosphate + ADP + H(+). It functions in the pathway amino-sugar metabolism; 1,6-anhydro-N-acetylmuramate degradation. Its pathway is cell wall biogenesis; peptidoglycan recycling. In terms of biological role, catalyzes the specific phosphorylation of 1,6-anhydro-N-acetylmuramic acid (anhMurNAc) with the simultaneous cleavage of the 1,6-anhydro ring, generating MurNAc-6-P. Is required for the utilization of anhMurNAc either imported from the medium or derived from its own cell wall murein, and thus plays a role in cell wall recycling. This is Anhydro-N-acetylmuramic acid kinase from Agrobacterium fabrum (strain C58 / ATCC 33970) (Agrobacterium tumefaciens (strain C58)).